Here is a 72-residue protein sequence, read N- to C-terminus: Cell division protein ZapB (72 aa).

Positions Met-1 to Val-72 form a coiled coil.

This sequence belongs to the ZapB family. As to quaternary structure, homodimer. The ends of the coiled-coil dimer bind to each other, forming polymers. Interacts with FtsZ.

It localises to the cytoplasm. Non-essential, abundant cell division factor that is required for proper Z-ring formation. It is recruited early to the divisome by direct interaction with FtsZ, stimulating Z-ring assembly and thereby promoting cell division earlier in the cell cycle. Its recruitment to the Z-ring requires functional FtsA or ZipA. This chain is Cell division protein ZapB, found in Actinobacillus succinogenes (strain ATCC 55618 / DSM 22257 / CCUG 43843 / 130Z).